We begin with the raw amino-acid sequence, 42 residues long: Photosystem II reaction center protein J (42 aa).

A helical membrane pass occupies residues 10 to 30 (IPLWLVGTVAGTAALTLVAVF).

Belongs to the PsbJ family. PSII is composed of 1 copy each of membrane proteins PsbA, PsbB, PsbC, PsbD, PsbE, PsbF, PsbH, PsbI, PsbJ, PsbK, PsbL, PsbM, PsbT, PsbX, PsbY, PsbZ, Psb30/Ycf12, at least 3 peripheral proteins of the oxygen-evolving complex and a large number of cofactors. It forms dimeric complexes.

It is found in the plastid. The protein localises to the chloroplast thylakoid membrane. Its function is as follows. One of the components of the core complex of photosystem II (PSII). PSII is a light-driven water:plastoquinone oxidoreductase that uses light energy to abstract electrons from H(2)O, generating O(2) and a proton gradient subsequently used for ATP formation. It consists of a core antenna complex that captures photons, and an electron transfer chain that converts photonic excitation into a charge separation. In Chlorella vulgaris (Green alga), this protein is Photosystem II reaction center protein J.